The following is a 245-amino-acid chain: 1-(5-phosphoribosyl)-5-[(5-phosphoribosylamino)methylideneamino] imidazole-4-carboxamide isomerase (245 aa).

Residue Asp8 is the Proton acceptor of the active site. Asp129 serves as the catalytic Proton donor.

The protein belongs to the HisA/HisF family.

It is found in the cytoplasm. It catalyses the reaction 1-(5-phospho-beta-D-ribosyl)-5-[(5-phospho-beta-D-ribosylamino)methylideneamino]imidazole-4-carboxamide = 5-[(5-phospho-1-deoxy-D-ribulos-1-ylimino)methylamino]-1-(5-phospho-beta-D-ribosyl)imidazole-4-carboxamide. It functions in the pathway amino-acid biosynthesis; L-histidine biosynthesis; L-histidine from 5-phospho-alpha-D-ribose 1-diphosphate: step 4/9. This chain is 1-(5-phosphoribosyl)-5-[(5-phosphoribosylamino)methylideneamino] imidazole-4-carboxamide isomerase, found in Rhodopseudomonas palustris (strain BisB18).